The following is a 316-amino-acid chain: Coiled-coil domain-containing protein 42 (316 aa).

Coiled-coil stretches lie at residues 39–146 (SPSI…SAKL) and 178–232 (LVSM…DRAR).

The protein belongs to the CFAP73 family. As to quaternary structure, interacts with ODF1 and ODF2. Interacts with CCDC38. Interacts with CCDC146. Interacts with CFAP53.

It localises to the cytoplasm. It is found in the perinuclear region. Its subcellular location is the cytoskeleton. The protein resides in the cell projection. The protein localises to the cilium. It localises to the flagellum. It is found in the microtubule organizing center. Its subcellular location is the centrosome. Its function is as follows. Essential for male fertility. Required for sperm development. In Homo sapiens (Human), this protein is Coiled-coil domain-containing protein 42.